The following is a 110-amino-acid chain: Phosphoribosyl-ATP pyrophosphatase (110 aa).

The protein belongs to the PRA-PH family.

The protein localises to the cytoplasm. The catalysed reaction is 1-(5-phospho-beta-D-ribosyl)-ATP + H2O = 1-(5-phospho-beta-D-ribosyl)-5'-AMP + diphosphate + H(+). Its pathway is amino-acid biosynthesis; L-histidine biosynthesis; L-histidine from 5-phospho-alpha-D-ribose 1-diphosphate: step 2/9. This Stutzerimonas stutzeri (strain A1501) (Pseudomonas stutzeri) protein is Phosphoribosyl-ATP pyrophosphatase.